The following is a 281-amino-acid chain: MSAQESCLSLIKYFLFVFNLFFFVLGGLIFCFGTWILIDKTSFVSFVGLSFVPLQTWSKVLSVSGVLTMALALLGCVGALKELRCLLGLYFGMLLLLFATQITLGILISTQRVRLERRVQELVLRTIQSYRTNPDETAAEESWDYAQFQLRCCGWQSPRDWNKAQMLKANGSEELFVPCSCYNSTATNDSSGFDKLFLSQLSRLGPRAKLRQTADICALPAKAHIYREGCARSLQKWLHNNIISIVGICLGVGLLELGFMTLSIFLCRNLDHVYDRLARYR.

At 1–17 the chain is on the cytoplasmic side; sequence MSAQESCLSLIKYFLFV. Residues 18–38 form a helical membrane-spanning segment; that stretch reads FNLFFFVLGGLIFCFGTWILI. Residues 39-59 lie on the Extracellular side of the membrane; that stretch reads DKTSFVSFVGLSFVPLQTWSK. The helical transmembrane segment at 60–74 threads the bilayer; it reads VLSVSGVLTMALALL. Residues 75–85 are Cytoplasmic-facing; the sequence is GCVGALKELRC. Residues 86-111 form a helical membrane-spanning segment; sequence LLGLYFGMLLLLFATQITLGILISTQ. The Extracellular portion of the chain corresponds to 112–241; that stretch reads RVRLERRVQE…RSLQKWLHNN (130 aa). Asn170, Asn183, and Asn188 each carry an N-linked (GlcNAc...) asparagine glycan. A helical membrane pass occupies residues 242–266; it reads IISIVGICLGVGLLELGFMTLSIFL. The Cytoplasmic segment spans residues 267–281; sequence CRNLDHVYDRLARYR.

It belongs to the tetraspanin (TM4SF) family. In terms of assembly, interacts with SCIMP. Interacts with SOCS3. Interacts with DECTIN1/CLEC7A. In terms of processing, tyrosine phosphorylated; leading to activation of downstream signaling pathways. As to expression, B-lymphocytes.

It localises to the cell membrane. Functionally, structural component of specialized membrane microdomains known as tetraspanin-enriched microdomains (TERMs), which act as platforms for receptor clustering and signaling. Participates thereby in diverse biological functions such as cell signal transduction, adhesion, migration and protein trafficking. Upon ligand binding, two signaling pathways are activated, one acting through phosphorylation by LYN leading to cell death or a survival pathway with activation of GSK3B. Plays an essential role essential for clustering of integrin ITGA4/ITGB1 and promotes its mobility in the plasma membrane of B-cells. In turn, participates in ITGA4/ITGB1 integrin-mediated antiapoptotic signaling through AKT. Plays also a role in the migration of dendritic cells and neutrophils to draining lymph nodes, as well as in their integrin-mediated adhesion. Negatively regulates IL-6 responses through direct interaction with SOCS3 thereby preventing constitutive IL-6 signaling. Alternatively, inhibition of IL-6 signaling can also occur via interaction and stabilization of DECTIN1/CLEC7A at the cell membrane to inhibit its ability to promote the production of IL-6. The protein is Leukocyte antigen CD37 (Cd37) of Rattus norvegicus (Rat).